Here is a 301-residue protein sequence, read N- to C-terminus: Probable tRNA pseudouridine synthase B (301 aa).

The active-site Nucleophile is Asp54. Residues 227 to 301 (LPRLTIADSA…VVVALERVLV (75 aa)) enclose the PUA domain.

It belongs to the pseudouridine synthase TruB family. Type 2 subfamily.

The catalysed reaction is uridine(55) in tRNA = pseudouridine(55) in tRNA. Functionally, could be responsible for synthesis of pseudouridine from uracil-55 in the psi GC loop of transfer RNAs. The protein is Probable tRNA pseudouridine synthase B of Halobacterium salinarum (strain ATCC 29341 / DSM 671 / R1).